A 57-amino-acid polypeptide reads, in one-letter code: Light-harvesting protein B-808/866 alpha chain (57 aa).

The residue at position 1 (Met1) is an N-formylmethionine. Topologically, residues 1 to 10 are cytoplasmic; that stretch reads MQPRSPVRTN. Residues 11 to 30 form a helical membrane-spanning segment; the sequence is IVIFTILGFVVALLIHFIVL. His26 is a binding site for a bacteriochlorophyll. Residues 31 to 57 are Periplasmic-facing; it reads SSPEYNWLSNAEGGALLLSAARALFGI.

This sequence belongs to the antenna complex alpha subunit family. As to quaternary structure, the core complex is formed by different alpha and beta chains, binding bacteriochlorophyll molecules, and arranged most probably in tetrameric structures disposed around the reaction center. The non-pigmented gamma chains may constitute additional components.

Its subcellular location is the cell membrane. In terms of biological role, antenna complexes are light-harvesting systems, which transfer the excitation energy to the reaction centers. This is Light-harvesting protein B-808/866 alpha chain (puf2A) from Chloroflexus aurantiacus (strain ATCC 29366 / DSM 635 / J-10-fl).